The primary structure comprises 135 residues: Photosystem II extrinsic protein U (135 aa).

The first 29 residues, 1 to 29 (MKRLLSWLTGALVMASLMAGLVMPSSVYA), serve as a signal peptide directing secretion.

Belongs to the PsbU family. PSII is composed of 1 copy each of membrane proteins PsbA, PsbB, PsbC, PsbD, PsbE, PsbF, PsbH, PsbI, PsbJ, PsbK, PsbL, PsbM, PsbT, PsbX, PsbY, PsbZ, Psb30/Ycf12, peripheral proteins PsbO, CyanoQ (PsbQ), PsbU, PsbV and a large number of cofactors. It forms dimeric complexes.

It localises to the cellular thylakoid membrane. Functionally, one of the extrinsic, lumenal subunits of photosystem II (PSII). PSII is a light-driven water plastoquinone oxidoreductase, using light energy to abstract electrons from H(2)O, generating a proton gradient subsequently used for ATP formation. The extrinsic proteins stabilize the structure of photosystem II oxygen-evolving complex (OEC), the ion environment of oxygen evolution and protect the OEC against heat-induced inactivation. This chain is Photosystem II extrinsic protein U, found in Synechococcus sp. (strain CC9605).